Reading from the N-terminus, the 428-residue chain is MKKKLNLCPKGTYDFFGQGAKIFIDVRKVFFNQAKKFNFSYIETPIFEYANIFLTTNQIADIVSKELYKFFDKSGRELALRPEGTAPIMRSVAQHKLFQTEKKFFYFGPMFRYENPQKGRFRQFYQAGFEIINYKKDSLEFQILEIILLIKSIFKDLGINEYELKINFLSNLTTRNIYEKNLAQYFEKFSDKLEPISKIRIKKNPLRILDDKIEQEKEFVKLAPKINTFWTMEDKNIFNRITSILEEFKISYKVDYNLVRGLDYYDDFVFEFIDTSQTLGTKLALVGGGCYNNLPTKFGLNNFKSIGMAFGIERLIEILKSKKNIKEQNLDFFLLSFTDKEILLNFKLAKILRKENFLVDLNKTPFSVSKGFQLAKKSGAKFVFFFEKNQAKNYISLKNLQTGKNEQILYTEINFEYLNSIIKASENA.

The protein belongs to the class-II aminoacyl-tRNA synthetase family. Homodimer.

It localises to the cytoplasm. It carries out the reaction tRNA(His) + L-histidine + ATP = L-histidyl-tRNA(His) + AMP + diphosphate + H(+). The sequence is that of Histidine--tRNA ligase from Mesomycoplasma hyopneumoniae (strain J / ATCC 25934 / NCTC 10110) (Mycoplasma hyopneumoniae).